Reading from the N-terminus, the 804-residue chain is Phosphatidylinositol 4-kinase beta (804 aa).

A PIK helical domain is found at 55–245 (LEKVKMIHGS…GTKLRKLILS (191 aa)). 2 disordered regions span residues 69 to 122 (LDKV…ARRR) and 251 to 309 (AHKK…EPVR). 2 stretches are compositionally biased toward polar residues: residues 91 to 103 (KLTN…TSSR) and 281 to 300 (DATV…SNPK). One can recognise a PI3K/PI4K catalytic domain in the interval 523-789 (EPWEEKVRRI…MVDGSMRSIT (267 aa)). The tract at residues 529–535 (VRRIREG) is G-loop. The interval 656–664 (QVKDRHNGN) is catalytic loop. An activation loop region spans residues 675-699 (HIDFGFILSSSPRNLGFETSAFKLT).

This sequence belongs to the PI3/PI4-kinase family. Type III PI4K subfamily. Requires Mg(2+) as cofactor. It depends on Mn(2+) as a cofactor.

The protein localises to the endomembrane system. Its subcellular location is the mitochondrion outer membrane. It localises to the rough endoplasmic reticulum membrane. The enzyme catalyses a 1,2-diacyl-sn-glycero-3-phospho-(1D-myo-inositol) + ATP = a 1,2-diacyl-sn-glycero-3-phospho-(1D-myo-inositol 4-phosphate) + ADP + H(+). Its function is as follows. Phosphorylates phosphatidylinositol (PI) in the first committed step in the production of the second messenger inositol-1,4,5,-trisphosphate (PIP). May play an important role in the inner ear development. The protein is Phosphatidylinositol 4-kinase beta (pi4kb) of Xenopus laevis (African clawed frog).